Here is a 277-residue protein sequence, read N- to C-terminus: Large ribosomal subunit protein uL2 (277 aa).

2 disordered regions span residues 36-55 (PLPK…RHHG) and 213-277 (WKGI…RKKK).

Belongs to the universal ribosomal protein uL2 family. In terms of assembly, part of the 50S ribosomal subunit. Forms a bridge to the 30S subunit in the 70S ribosome.

In terms of biological role, one of the primary rRNA binding proteins. Required for association of the 30S and 50S subunits to form the 70S ribosome, for tRNA binding and peptide bond formation. It has been suggested to have peptidyltransferase activity; this is somewhat controversial. Makes several contacts with the 16S rRNA in the 70S ribosome. This Staphylococcus aureus (strain bovine RF122 / ET3-1) protein is Large ribosomal subunit protein uL2.